The primary structure comprises 278 residues: 2-dehydro-3-deoxyphosphooctonate aldolase (278 aa).

Belongs to the KdsA family.

The protein localises to the cytoplasm. It carries out the reaction D-arabinose 5-phosphate + phosphoenolpyruvate + H2O = 3-deoxy-alpha-D-manno-2-octulosonate-8-phosphate + phosphate. It functions in the pathway carbohydrate biosynthesis; 3-deoxy-D-manno-octulosonate biosynthesis; 3-deoxy-D-manno-octulosonate from D-ribulose 5-phosphate: step 2/3. It participates in bacterial outer membrane biogenesis; lipopolysaccharide biosynthesis. The polypeptide is 2-dehydro-3-deoxyphosphooctonate aldolase (Fusobacterium nucleatum subsp. nucleatum (strain ATCC 25586 / DSM 15643 / BCRC 10681 / CIP 101130 / JCM 8532 / KCTC 2640 / LMG 13131 / VPI 4355)).